The chain runs to 138 residues: Small ribosomal subunit protein uS11c (138 aa).

Positions 1–21 (MTKAIQKIGSRRNGRIASRKN) are disordered. The segment covering 9-21 (GSRRNGRIASRKN) has biased composition (basic residues).

It belongs to the universal ribosomal protein uS11 family. As to quaternary structure, part of the 30S ribosomal subunit.

Its subcellular location is the plastid. It localises to the chloroplast. The sequence is that of Small ribosomal subunit protein uS11c from Ceratophyllum demersum (Rigid hornwort).